Here is a 256-residue protein sequence, read N- to C-terminus: Ribonuclease HII (256 aa).

The RNase H type-2 domain maps to 72–256 (ALICGIDEVG…TFEPIKSLVN (185 aa)). Asp-78, Glu-79, and Asp-170 together coordinate a divalent metal cation.

This sequence belongs to the RNase HII family. The cofactor is Mn(2+). It depends on Mg(2+) as a cofactor.

The protein localises to the cytoplasm. It carries out the reaction Endonucleolytic cleavage to 5'-phosphomonoester.. Endonuclease that specifically degrades the RNA of RNA-DNA hybrids. This is Ribonuclease HII from Staphylococcus saprophyticus subsp. saprophyticus (strain ATCC 15305 / DSM 20229 / NCIMB 8711 / NCTC 7292 / S-41).